We begin with the raw amino-acid sequence, 155 residues long: Ribonuclease H (155 aa).

The RNase H type-1 domain occupies methionine 1–serine 142. 4 residues coordinate Mg(2+): aspartate 10, glutamate 48, aspartate 70, and aspartate 134.

The protein belongs to the RNase H family. Monomer. It depends on Mg(2+) as a cofactor.

It is found in the cytoplasm. The enzyme catalyses Endonucleolytic cleavage to 5'-phosphomonoester.. Its function is as follows. Endonuclease that specifically degrades the RNA of RNA-DNA hybrids. The protein is Ribonuclease H of Klebsiella pneumoniae (strain 342).